The chain runs to 196 residues: PRADC1-like protein (196 aa).

Residues 1-18 (MLIAWLVLAATLSRSIRA) form the signal peptide. Residues 73–171 (ITDPPGACQE…STLQRLKRVH (99 aa)) form the PA domain. A glycan (N-linked (GlcNAc...) asparagine) is linked at Asn179.

Its subcellular location is the secreted. May be involved in iversification of muscle cell fates. This Drosophila melanogaster (Fruit fly) protein is PRADC1-like protein.